We begin with the raw amino-acid sequence, 472 residues long: GTPase Der (472 aa).

EngA-type G domains follow at residues 3–166 and 178–351; these read AVIA…PPAE and IPVA…AAAH. GTP contacts are provided by residues 9–16, 56–60, 118–121, 184–191, 231–235, and 296–299; these read GRPNVGKS, DTGGM, NKTD, DTAGV, and NKWD. The region spanning 352–436 is the KH-like domain; sequence RDLATPELND…PVRIECRASD (85 aa). A disordered region spans residues 434 to 472; that stretch reads ASDNPFADKPNQLTERQRRRRQRVIHHAKKREKKRKRRR. Residues 450–472 are compositionally biased toward basic residues; that stretch reads QRRRRQRVIHHAKKREKKRKRRR.

Belongs to the TRAFAC class TrmE-Era-EngA-EngB-Septin-like GTPase superfamily. EngA (Der) GTPase family. As to quaternary structure, associates with the 50S ribosomal subunit.

In terms of biological role, GTPase that plays an essential role in the late steps of ribosome biogenesis. In Halorhodospira halophila (strain DSM 244 / SL1) (Ectothiorhodospira halophila (strain DSM 244 / SL1)), this protein is GTPase Der.